A 1061-amino-acid chain; its full sequence is Calcium-transporting ATPase 4, endoplasmic reticulum-type (1061 aa).

Positions 1–21 are disordered; sequence MGKGGEDCGNKQTNSSELVKS. Topologically, residues 1–70 are cytoplasmic; sequence MGKGGEDCGN…NELEKPEGTS (70 aa). The helical transmembrane segment at 71–91 threads the bilayer; that stretch reads IFKLILEQFNDTLVRILLAAA. Topologically, residues 92–115 are lumenal; the sequence is VISFVLAFFDGDEGGEMGITAFVE. Residues 116–135 traverse the membrane as a helical segment; it reads PLVIFLILIVNAIVGIWQET. Residues 136–278 lie on the Cytoplasmic side of the membrane; that stretch reads NAEKALEALK…EEDTPLKKKL (143 aa). A helical membrane pass occupies residues 279 to 298; it reads NEFGEVLTMIIGLICALVWL. Residues 299–327 are Lumenal-facing; sequence INVKYFLSWEYVDGWPRNFKFSFEKCTYY. The helical transmembrane segment at 328-345 threads the bilayer; that stretch reads FEIAVALAVAAIPEGLPA. Residues Val-336, Ala-337, Ile-339, and Glu-341 each contribute to the Ca(2+) site. The Cytoplasmic segment spans residues 346–786; the sequence is VITTCLALGT…GEGRSIYNNM (441 aa). Asp-383 (4-aspartylphosphate intermediate) is an active-site residue. Mg(2+) contacts are provided by Asp-731 and Asp-735. A helical membrane pass occupies residues 787 to 806; sequence KAFIRYMISSNIGEVASIFL. Ca(2+) is bound by residues Asn-797 and Glu-800. The Lumenal portion of the chain corresponds to 807 to 816; sequence TAALGIPEGM. A helical transmembrane segment spans residues 817 to 837; that stretch reads IPVQLLWVNLVTDGPPATALG. The Ca(2+) site is built by Asn-825, Thr-828, and Asp-829. The Cytoplasmic segment spans residues 838-857; it reads FNPPDKDIMKKPPRRSDDSL. Residues 858 to 880 form a helical membrane-spanning segment; it reads ITAWILFRYMVIGLYVGVATVGV. Residues 881–950 are Lumenal-facing; sequence FIIWYTHNSF…YFQQGKIKAS (70 aa). The helical transmembrane segment at 951–970 threads the bilayer; sequence TLSLSVLVAIEMFNSLNALS. Glu-961 contacts Ca(2+). The Cytoplasmic segment spans residues 971-983; sequence EDGSLVTMPPWVN. A helical membrane pass occupies residues 984 to 1002; it reads PWLLLAMAVSFGLHFVILY. The Lumenal portion of the chain corresponds to 1003-1017; that stretch reads VPFLAQVFGIVPLSL. Residues 1018-1038 traverse the membrane as a helical segment; the sequence is NEWLLVLAVSLPVILIDEVLK. At 1039–1061 the chain is on the cytoplasmic side; that stretch reads FVGRCTSGYRYSPRTPSAKQKEE.

The protein belongs to the cation transport ATPase (P-type) (TC 3.A.3) family. Type IIA subfamily.

It localises to the membrane. It carries out the reaction Ca(2+)(in) + ATP + H2O = Ca(2+)(out) + ADP + phosphate + H(+). Its function is as follows. This magnesium-dependent enzyme catalyzes the hydrolysis of ATP coupled with the translocation of calcium from the cytosol to an endomembrane compartment. The chain is Calcium-transporting ATPase 4, endoplasmic reticulum-type (ECA4) from Arabidopsis thaliana (Mouse-ear cress).